Here is a 202-residue protein sequence, read N- to C-terminus: Orotate phosphoribosyltransferase (202 aa).

Residues Lys93 and 113 to 121 each bind 5-phospho-alpha-D-ribose 1-diphosphate; that span reads EDIITTGGS. Orotate is bound by residues Thr117 and Arg145.

This sequence belongs to the purine/pyrimidine phosphoribosyltransferase family. PyrE subfamily. As to quaternary structure, homodimer. It depends on Mg(2+) as a cofactor.

It carries out the reaction orotidine 5'-phosphate + diphosphate = orotate + 5-phospho-alpha-D-ribose 1-diphosphate. The protein operates within pyrimidine metabolism; UMP biosynthesis via de novo pathway; UMP from orotate: step 1/2. Its function is as follows. Catalyzes the transfer of a ribosyl phosphate group from 5-phosphoribose 1-diphosphate to orotate, leading to the formation of orotidine monophosphate (OMP). The protein is Orotate phosphoribosyltransferase of Campylobacter curvus (strain 525.92).